The primary structure comprises 383 residues: Succinyl-diaminopimelate desuccinylase (383 aa).

Position 73 (His73) interacts with Zn(2+). Asp75 is an active-site residue. Asp107 is a binding site for Zn(2+). The active-site Proton acceptor is the Glu141. Zn(2+)-binding residues include Glu142, Glu170, and His356.

This sequence belongs to the peptidase M20A family. DapE subfamily. As to quaternary structure, homodimer. Zn(2+) serves as cofactor. The cofactor is Co(2+).

The catalysed reaction is N-succinyl-(2S,6S)-2,6-diaminopimelate + H2O = (2S,6S)-2,6-diaminopimelate + succinate. It participates in amino-acid biosynthesis; L-lysine biosynthesis via DAP pathway; LL-2,6-diaminopimelate from (S)-tetrahydrodipicolinate (succinylase route): step 3/3. Its function is as follows. Catalyzes the hydrolysis of N-succinyl-L,L-diaminopimelic acid (SDAP), forming succinate and LL-2,6-diaminopimelate (DAP), an intermediate involved in the bacterial biosynthesis of lysine and meso-diaminopimelic acid, an essential component of bacterial cell walls. This is Succinyl-diaminopimelate desuccinylase from Pseudomonas aeruginosa (strain UCBPP-PA14).